Here is a 563-residue protein sequence, read N- to C-terminus: (-)-germacrene D synthase (563 aa).

A coiled-coil region spans residues 44–71 (TEITAAEKEELEKQKEKVKNLLDQTPND). Positions 314 and 318 each coordinate Mn(2+). The DDXXD motif motif lies at 314-318 (DDIYD). Homodimerization stretches follow at residues 320-326 (YGSLDEL) and 392-429 (EAEW…VGME). Asp-459 and Glu-467 together coordinate Mn(2+).

It belongs to the terpene synthase family. In terms of assembly, homodimer. It depends on Mn(2+) as a cofactor. Mg(2+) is required as a cofactor. As to expression, expressed in peltate glandular trichomes. Present at low levels in flowers, leaves and stems.

The catalysed reaction is (2E,6E)-farnesyl diphosphate = (-)-germacrene D + diphosphate. Its pathway is secondary metabolite biosynthesis; terpenoid biosynthesis. Functionally, involved in the biosynthesis of phenolic sesquiterpenes natural products. Sesquiterpene synthase that catalyzes mainly the formation of (-)-germacrene D and minor amounts of other sesquiterpenes (e.g. bicyclo-germacrene) from farnesyl diphosphate (FPP). Also triggers moderate amounts formation of myrcene, limonene, terpinolene and linalool in the presence of geranyl diphosphate (GPP). The chain is (-)-germacrene D synthase from Origanum vulgare (Wild marjoram).